A 576-amino-acid polypeptide reads, in one-letter code: Formate--tetrahydrofolate ligase 2 (576 aa).

ATP is bound at residue 69 to 76 (TPLGEGKT).

Belongs to the formate--tetrahydrofolate ligase family.

The enzyme catalyses (6S)-5,6,7,8-tetrahydrofolate + formate + ATP = (6R)-10-formyltetrahydrofolate + ADP + phosphate. It participates in one-carbon metabolism; tetrahydrofolate interconversion. The chain is Formate--tetrahydrofolate ligase 2 from Rubrobacter xylanophilus (strain DSM 9941 / JCM 11954 / NBRC 16129 / PRD-1).